The primary structure comprises 140 residues: uncharacterized protein (140 aa).

The protein belongs to the peptidase S24 family.

This is an uncharacterized protein from Haemophilus influenzae (strain ATCC 51907 / DSM 11121 / KW20 / Rd).